Here is a 125-residue protein sequence, read N- to C-terminus: Histone H2A (125 aa).

The segment covering 1–18 (MSGRGKGGKVKGKSKTRS) has biased composition (basic residues). The disordered stretch occupies residues 1–23 (MSGRGKGGKVKGKSKTRSSRAGL). Residue Ser-2 is modified to N-acetylserine. The residue at position 104 (Gln-104) is an N5-methylglutamine.

It belongs to the histone H2A family. In terms of assembly, the nucleosome is a histone octamer containing two molecules each of H2A, H2B, H3 and H4 assembled in one H3-H4 heterotetramer and two H2A-H2B heterodimers. The octamer wraps approximately 147 bp of DNA.

It is found in the nucleus. It localises to the chromosome. Its function is as follows. Core component of nucleosome. Nucleosomes wrap and compact DNA into chromatin, limiting DNA accessibility to the cellular machineries which require DNA as a template. Histones thereby play a central role in transcription regulation, DNA repair, DNA replication and chromosomal stability. DNA accessibility is regulated via a complex set of post-translational modifications of histones, also called histone code, and nucleosome remodeling. This is Histone H2A from Sepia officinalis (Common cuttlefish).